A 60-amino-acid chain; its full sequence is Large ribosomal subunit protein bL32 (60 aa).

Residues 1 to 60 form a disordered region; sequence MAVQQNKKSRSARDMRRSHDALESNALSVEKSTGEVHLRHHVSPDGFYRGRKVVDKGSDE. The span at 11 to 22 shows a compositional bias: basic and acidic residues; it reads SARDMRRSHDAL.

Belongs to the bacterial ribosomal protein bL32 family.

The sequence is that of Large ribosomal subunit protein bL32 from Pseudomonas aeruginosa (strain LESB58).